The sequence spans 974 residues: Pentatricopeptide repeat-containing protein At5g61990, mitochondrial (974 aa).

The N-terminal 31 residues, M1 to L31, are a transit peptide targeting the mitochondrion. 24 PPR repeats span residues K96 to V130, D150 to P184, R185 to F219, D220 to E250, N257 to P275, L276 to L310, D311 to I345, K346 to P380, Q381 to I415, S416 to P450, N451 to P485, D486 to P520, N521 to P555, N556 to G590, D591 to P625, D626 to P660, N661 to P695, N696 to P730, D731 to G761, S765 to R799, N804 to P838, T839 to P873, D874 to D908, and S914 to P948.

The protein belongs to the PPR family. P subfamily.

It is found in the mitochondrion. The protein is Pentatricopeptide repeat-containing protein At5g61990, mitochondrial of Arabidopsis thaliana (Mouse-ear cress).